A 1056-amino-acid polypeptide reads, in one-letter code: ATP-dependent helicase wrn-1 (1056 aa).

The interval 1 to 102 is disordered; it reads MISDDDDLPS…SSSDDSDQGD (102 aa). Repeat copies occupy residues 17–26 and 28–37. A 2 X 10 AA repeats of N-[ED]-E-L-P-E-T-E-P-E region spans residues 17–37; sequence NEELPETEPEDNDELPETEPE. Residues 19–38 show a composition bias toward acidic residues; that stretch reads ELPETEPEDNDELPETEPES. Residues 43 to 53 are compositionally biased toward polar residues; the sequence is PTVTSNKTENQ. Over residues 54 to 63 the composition is skewed to acidic residues; it reads VADEDYDSFD. The Helicase ATP-binding domain occupies 236 to 406; the sequence is VRNVLGGKDQ…IANLRLRKPL (171 aa). Residue 249–256 participates in ATP binding; it reads MSTGYGKS. The DEAH box signature appears at 348–351; the sequence is DEAH. The region spanning 427–583 is the Helicase C-terminal domain; that stretch reads MAEDLGLFMK…NLTMMLRQLE (157 aa). Zn(2+)-binding residues include Cys-591, Cys-614, Cys-615, and Cys-618. Residues 749 to 771 form a disordered region; the sequence is KEKAAPSTVPGASRSQSTKSSTE. Positions 761–771 are enriched in polar residues; sequence SRSQSTKSSTE. In terms of domain architecture, HRDC spans 806–886; that stretch reads PEKIDQLRSR…VQFSKETGIA (81 aa). A disordered region spans residues 1018 to 1056; the sequence is QEKPDIQSMPSTSNPSTIKTVPSTPSSSLRAPPLKKFKL. Over residues 1025–1046 the composition is skewed to polar residues; the sequence is SMPSTSNPSTIKTVPSTPSSSL.

Belongs to the helicase family. RecQ subfamily. It depends on Zn(2+) as a cofactor.

It is found in the nucleus. It catalyses the reaction Couples ATP hydrolysis with the unwinding of duplex DNA by translocating in the 3'-5' direction.. The enzyme catalyses ATP + H2O = ADP + phosphate + H(+). In terms of biological role, essential for the formation of DNA replication focal centers; stably associates with foci elements generating binding sites for RP-A. Exhibits a magnesium-dependent ATP-dependent 3'-5' DNA-helicase activity. May be involved in the control of genomic stability. The protein is ATP-dependent helicase wrn-1 (wrn-1) of Caenorhabditis elegans.